We begin with the raw amino-acid sequence, 167 residues long: Ribonuclease H (167 aa).

The region spanning 1 to 143 (MYKQIEIFTD…CDQLARKAAK (143 aa)) is the RNase H type-1 domain. Positions 10, 48, 70, and 135 each coordinate Mg(2+).

Belongs to the RNase H family. Monomer. It depends on Mg(2+) as a cofactor.

It localises to the cytoplasm. It catalyses the reaction Endonucleolytic cleavage to 5'-phosphomonoester.. Functionally, endonuclease that specifically degrades the RNA of RNA-DNA hybrids. This Blochmanniella floridana protein is Ribonuclease H.